A 32-amino-acid chain; its full sequence is Dermaseptin-8 (32 aa).

A Glutamine amide modification is found at Gln32.

As to expression, expressed by the skin glands.

Its subcellular location is the secreted. In terms of biological role, antimicrobial peptide, active against the Gram-positive bacterium S.aureus, and the Gram-negative bacteriun E.coli. Has hemolytic activity at 432 uM. This chain is Dermaseptin-8, found in Phyllomedusa tarsius (Brownbelly leaf frog).